The sequence spans 950 residues: Serine/threonine-protein kinase 10-A (950 aa).

One can recognise a Protein kinase domain in the interval 36 to 294; the sequence is WEIIGELGDG…AAQLLEHPFV (259 aa). ATP-binding positions include 42–50 and K65; that span reads LGDGAFGKV. Residue D157 is the Proton acceptor of the active site. Positions 319 to 331 are enriched in acidic residues; it reads EEQGEAEEEEDSD. The segment at 319–478 is disordered; sequence EEQGEAEEEE…DSGSNSASES (160 aa). Positions 347 to 356 are enriched in basic and acidic residues; the sequence is EIGKDIEREQ. Positions 365–382 are enriched in polar residues; that stretch reads SATSPQKTDSQADNYSQR. A compositionally biased stretch (basic and acidic residues) spans 416–432; that stretch reads EPKRNSTAESYRGEEHS. A compositionally biased stretch (low complexity) spans 433–445; sequence SASSQRQRSAQSA. The segment covering 452 to 463 has biased composition (polar residues); sequence SFDSPTRYFTNW. Residues S482, S486, and S490 each carry the phosphoserine; by PLK1 modification. Residues 634–786 adopt a coiled-coil conformation; that stretch reads IKFLEQLKLR…QLRLRQQQEK (153 aa).

The protein belongs to the protein kinase superfamily. STE Ser/Thr protein kinase family. STE20 subfamily. As to quaternary structure, homodimer. Autophosphorylates. Phosphorylated by plk1/plx1, suggesting the existence of a feedback loop with plk1/plx1. activation of the protein.

It localises to the cell membrane. It carries out the reaction L-seryl-[protein] + ATP = O-phospho-L-seryl-[protein] + ADP + H(+). The catalysed reaction is L-threonyl-[protein] + ATP = O-phospho-L-threonyl-[protein] + ADP + H(+). Functionally, may act as a polo kinase kinase by mediating phosphorylation of plk1/plx1 and subsequent activation of plk1/plx1 during oocyte maturation. The sequence is that of Serine/threonine-protein kinase 10-A (stk10-a) from Xenopus laevis (African clawed frog).